The sequence spans 420 residues: Glutaryl-CoA dehydrogenase, mitochondrial (420 aa).

A substrate-binding site is contributed by 125 to 126; sequence RS. FAD is bound by residues 164-167, serine 173, and 198-200; these read FGLT and WIT. A substrate-binding site is contributed by serine 173. Residues 273-277 and arginine 280 each bind substrate; that span reads FSCLN. Residue glutamate 400 is the Proton acceptor of the active site. Residues threonine 402 and phenylalanine 420 each coordinate FAD.

The protein belongs to the acyl-CoA dehydrogenase family. FAD is required as a cofactor.

Its subcellular location is the mitochondrion matrix. The enzyme catalyses glutaryl-CoA + oxidized [electron-transfer flavoprotein] + 2 H(+) = (2E)-butenoyl-CoA + reduced [electron-transfer flavoprotein] + CO2. It functions in the pathway amino-acid metabolism; lysine degradation. The protein operates within amino-acid metabolism; tryptophan metabolism. This chain is Glutaryl-CoA dehydrogenase, mitochondrial (gcdh), found in Dictyostelium discoideum (Social amoeba).